A 141-amino-acid chain; its full sequence is Metallothiol transferase FosB (141 aa).

In terms of domain architecture, VOC spans 5–120 (SINHLLFSVS…DGHKFEFHTG (116 aa)). Mg(2+) contacts are provided by His8, His67, and Glu116. Glu116 serves as the catalytic Proton donor/acceptor.

This sequence belongs to the fosfomycin resistance protein family. FosB subfamily. Homodimer. Mg(2+) serves as cofactor.

It localises to the cytoplasm. Functionally, metallothiol transferase which confers resistance to fosfomycin by catalyzing the addition of a thiol cofactor to fosfomycin. L-cysteine is probably the physiological thiol donor. This Lysinibacillus sphaericus (strain C3-41) protein is Metallothiol transferase FosB.